The primary structure comprises 182 residues: uncharacterized protein (182 aa).

Positions 1-23 are enriched in polar residues; sequence MILSDQNFLQTQWKEPQTAQSKN. Positions 1–33 are disordered; it reads MILSDQNFLQTQWKEPQTAQSKNTESKCEFHGN.

It belongs to the peptidase M24 family.

This is an uncharacterized protein from Caenorhabditis elegans.